The primary structure comprises 283 residues: D-alanine aminotransferase (283 aa).

Tyr-32 contacts substrate. Position 51 (Arg-51) interacts with pyridoxal 5'-phosphate. Substrate contacts are provided by Arg-99 and His-101. Lys-146 acts as the Proton acceptor in catalysis. Position 146 is an N6-(pyridoxal phosphate)lysine (Lys-146). Position 178 (Glu-178) interacts with pyridoxal 5'-phosphate.

It belongs to the class-IV pyridoxal-phosphate-dependent aminotransferase family. As to quaternary structure, homodimer. Pyridoxal 5'-phosphate is required as a cofactor.

It catalyses the reaction D-alanine + 2-oxoglutarate = D-glutamate + pyruvate. In terms of biological role, acts on the D-isomers of alanine, leucine, aspartate, glutamate, aminobutyrate, norvaline and asparagine. The enzyme transfers an amino group from a substrate D-amino acid to the pyridoxal phosphate cofactor to form pyridoxamine and an alpha-keto acid in the first half-reaction. The second half-reaction is the reverse of the first, transferring the amino group from the pyridoxamine to a second alpha-keto acid to form the product D-amino acid via a ping-pong mechanism. This is an important process in the formation of D-alanine and D-glutamate, which are essential bacterial cell wall components. This is D-alanine aminotransferase (dat) from Lysinibacillus sphaericus (Bacillus sphaericus).